The chain runs to 108 residues: Nucleoid-associated protein PSHAa1202 (108 aa).

Disordered stretches follow at residues 1 to 20 (MFKGGMGNMMKQAQQMQDRM) and 87 to 108 (TQERMGKVTGGMQLPPGMKMPF).

Belongs to the YbaB/EbfC family. As to quaternary structure, homodimer.

The protein resides in the cytoplasm. It localises to the nucleoid. Binds to DNA and alters its conformation. May be involved in regulation of gene expression, nucleoid organization and DNA protection. The chain is Nucleoid-associated protein PSHAa1202 from Pseudoalteromonas translucida (strain TAC 125).